The chain runs to 598 residues: uncharacterized protein (598 aa).

S46 carries the post-translational modification Phosphoserine. The region spanning 106 to 441 (LQNHLKTGPF…ADYISLSYSG (336 aa)) is the SAC domain. 2 consecutive transmembrane segments (helical) span residues 508 to 528 (TIRC…MTLF) and 535 to 555 (ILPP…SLYY).

It localises to the endoplasmic reticulum membrane. This is an uncharacterized protein from Schizosaccharomyces pombe (strain 972 / ATCC 24843) (Fission yeast).